The chain runs to 81 residues: Delta-conotoxin-like Ac6.3 (81 aa).

The N-terminal stretch at 1-22 is a signal peptide; sequence MKLTCVMIVAVLFLTAWTFVTA. A propeptide spanning residues 23-51 is cleaved from the precursor; it reads DDSRNGLENLSPKARHEMKNPEASKSNKR. 3 disulfides stabilise this stretch: C54/C69, C61/C73, and C68/C78.

Belongs to the conotoxin O1 superfamily. As to expression, expressed by the venom duct.

It localises to the secreted. Delta-conotoxins bind to site 6 of voltage-gated sodium channels (Nav) and inhibit the inactivation process. The sequence is that of Delta-conotoxin-like Ac6.3 from Conus achatinus (Little frog cone).